The following is a 315-amino-acid chain: Ribose-phosphate pyrophosphokinase (315 aa).

Residues 37–39 (DSE) and 96–97 (RQ) contribute to the ATP site. The Mg(2+) site is built by His131 and Asp170. Lys194 is a catalytic residue. Residues Arg196, Asp220, and 224 to 228 (DTGGT) each bind D-ribose 5-phosphate.

Belongs to the ribose-phosphate pyrophosphokinase family. Class I subfamily. In terms of assembly, homohexamer. It depends on Mg(2+) as a cofactor.

It is found in the cytoplasm. It catalyses the reaction D-ribose 5-phosphate + ATP = 5-phospho-alpha-D-ribose 1-diphosphate + AMP + H(+). The protein operates within metabolic intermediate biosynthesis; 5-phospho-alpha-D-ribose 1-diphosphate biosynthesis; 5-phospho-alpha-D-ribose 1-diphosphate from D-ribose 5-phosphate (route I): step 1/1. Its function is as follows. Involved in the biosynthesis of the central metabolite phospho-alpha-D-ribosyl-1-pyrophosphate (PRPP) via the transfer of pyrophosphoryl group from ATP to 1-hydroxyl of ribose-5-phosphate (Rib-5-P). This is Ribose-phosphate pyrophosphokinase from Marinomonas sp. (strain MWYL1).